Consider the following 177-residue polypeptide: Transmembrane protein 190 (177 aa).

The N-terminal stretch at methionine 1–glycine 21 is a signal peptide. The Extracellular segment spans residues asparagine 22–methionine 81. Residues tryptophan 31–arginine 71 enclose the P-type domain. Cystine bridges form between cysteine 33/cysteine 61, cysteine 43/cysteine 60, and cysteine 55/cysteine 67. A helical membrane pass occupies residues tryptophan 82 to tryptophan 102. Residues tryptophan 103–aspartate 177 are Cytoplasmic-facing. The interval lysine 131–aspartate 177 is disordered. Over residues glycine 157–aspartate 177 the composition is skewed to acidic residues.

The protein resides in the membrane. The chain is Transmembrane protein 190 (TMEM190) from Homo sapiens (Human).